The sequence spans 234 residues: UPF0173 metal-dependent hydrolase RHE_CH01853 (234 aa).

The protein belongs to the UPF0173 family.

This chain is UPF0173 metal-dependent hydrolase RHE_CH01853, found in Rhizobium etli (strain ATCC 51251 / DSM 11541 / JCM 21823 / NBRC 15573 / CFN 42).